A 501-amino-acid polypeptide reads, in one-letter code: UPF0288 protein Maeo_0995 (501 aa).

This sequence belongs to the UPF0288 family.

The sequence is that of UPF0288 protein Maeo_0995 from Methanococcus aeolicus (strain ATCC BAA-1280 / DSM 17508 / OCM 812 / Nankai-3).